The sequence spans 373 residues: Flagellar P-ring protein (373 aa).

The first 27 residues, 1–27 (MPSFSPTLLKLAAAALSALLLSGVAAS), serve as a signal peptide directing secretion.

The protein belongs to the FlgI family. The basal body constitutes a major portion of the flagellar organelle and consists of four rings (L,P,S, and M) mounted on a central rod.

Its subcellular location is the periplasm. It is found in the bacterial flagellum basal body. Its function is as follows. Assembles around the rod to form the L-ring and probably protects the motor/basal body from shearing forces during rotation. This chain is Flagellar P-ring protein, found in Rhodopseudomonas palustris (strain BisB5).